Consider the following 350-residue polypeptide: Pleckstrin (350 aa).

The PH 1 domain occupies 4–101; sequence KRIREGYLVK…WVRDIKKAIK (98 aa). Residue Lys-64 is modified to N6-acetyllysine. 2 positions are modified to phosphoserine; by PKC: Ser-113 and Ser-117. The DEP domain occupies 136 to 221; it reads TEKGIKELNL…NPDAFYYFPD (86 aa). One can recognise a PH 2 domain in the interval 244–347; the sequence is VIIKQGCLLK…WIRAIQMASR (104 aa).

Its function is as follows. Major protein kinase C substrate of platelets. The chain is Pleckstrin (PLEK) from Homo sapiens (Human).